Reading from the N-terminus, the 62-residue chain is Large ribosomal subunit protein uL30 (62 aa).

Belongs to the universal ribosomal protein uL30 family. Part of the 50S ribosomal subunit.

This Hydrogenovibrio crunogenus (strain DSM 25203 / XCL-2) (Thiomicrospira crunogena) protein is Large ribosomal subunit protein uL30.